The chain runs to 261 residues: Probable septum site-determining protein MinC (261 aa).

The interval 106-145 (RAPAAKPADEAEPAAVPAVETAAAPAAAAAPEQPSEPAPT) is disordered. Residues 118–144 (PAAVPAVETAAAPAAAAAPEQPSEPAP) are compositionally biased toward low complexity.

The protein belongs to the MinC family. In terms of assembly, interacts with MinD and FtsZ.

In terms of biological role, cell division inhibitor that blocks the formation of polar Z ring septums. Rapidly oscillates between the poles of the cell to destabilize FtsZ filaments that have formed before they mature into polar Z rings. Prevents FtsZ polymerization. In Burkholderia orbicola (strain AU 1054), this protein is Probable septum site-determining protein MinC.